A 103-amino-acid chain; its full sequence is uncharacterized protein (103 aa).

Residues 69–103 (SSISYPGGGGGGGGSAKSLSSSKPGGGGGSPLIFL) form a disordered region. 2 stretches are compositionally biased toward gly residues: residues 74 to 83 (PGGGGGGGGS) and 92 to 103 (PGGGGGSPLIFL).

This is an uncharacterized protein from Saccharomyces cerevisiae (strain ATCC 204508 / S288c) (Baker's yeast).